The following is a 208-amino-acid chain: UPF0319 protein VSAL_I2129 (208 aa).

Positions methionine 1–alanine 21 are cleaved as a signal peptide.

It belongs to the UPF0319 family.

The protein is UPF0319 protein VSAL_I2129 of Aliivibrio salmonicida (strain LFI1238) (Vibrio salmonicida (strain LFI1238)).